The sequence spans 224 residues: EF-hand calcium-binding domain-containing protein 1 (224 aa).

The N-terminal stretch at M1 to S21 is a signal peptide. The EF-hand domain maps to I115–D150. Residues D128, D130, D132, E134, and E139 each contribute to the Ca(2+) site.

In terms of tissue distribution, component of the acid-soluble organic matrix of calcified layers of the shell (at protein level).

The protein localises to the secreted. The polypeptide is EF-hand calcium-binding domain-containing protein 1 (Lottia gigantea (Giant owl limpet)).